The primary structure comprises 134 residues: Putative nickel-responsive regulator (134 aa).

Ni(2+)-binding residues include His-78, His-89, His-91, and Cys-97.

The protein belongs to the transcriptional regulatory CopG/NikR family. It depends on Ni(2+) as a cofactor.

Functionally, transcriptional regulator. The sequence is that of Putative nickel-responsive regulator from Chlorobaculum parvum (strain DSM 263 / NCIMB 8327) (Chlorobium vibrioforme subsp. thiosulfatophilum).